The primary structure comprises 229 residues: Ras-related protein Rab-33B (229 aa).

Residues asparagine 43, valine 44, glycine 45, lysine 46, threonine 47, cysteine 48, threonine 62, and threonine 65 each coordinate GTP. A Mg(2+)-binding site is contributed by threonine 47. The Switch 1 motif lies at 56–68; it reads GRFPDRTEATIGV. Mg(2+)-binding residues include threonine 65 and aspartate 88. The Switch 2 signature appears at 89 to 108; that stretch reads TAGQERFRKSMVQHYYRNVH. Residues glycine 91, asparagine 148, lysine 149, aspartate 151, alanine 179, and lysine 180 each coordinate GTP. 2 S-geranylgeranyl cysteine lipidation sites follow: cysteine 227 and cysteine 229. Cysteine 229 carries the cysteine methyl ester modification.

It belongs to the small GTPase superfamily. Rab family. Interacts (GTP- and GDP-bound forms) with ATG16L1; the complex consists of a tetramer where two RAB33B molecules bind independently one molecule of the ATG16L1 homodimer; the interaction promotes ATG12-ATG5-ATG16L1 complex recruitment to phagophores. Interacts with ATG16L2; however interaction is approximately hundred times lower than for ATG16L1. Interacts with RIC1 (via C-terminus domain); the interaction is direct with a preference for RAB33B-GTP. Interacts with RGP1. Requires Mg(2+) as cofactor. Post-translationally, prenylated.

The protein resides in the golgi apparatus membrane. The protein localises to the golgi apparatus. It is found in the cis-Golgi network. Its subcellular location is the preautophagosomal structure membrane. It carries out the reaction GTP + H2O = GDP + phosphate + H(+). With respect to regulation, regulated by guanine nucleotide exchange factors (GEFs) which promote the exchange of bound GDP for free GTP. Regulated by GTPase activating proteins (GAPs) such as SGSM2 which increase the GTP hydrolysis activity. Inhibited by GDP dissociation inhibitors (GDIs). Its function is as follows. The small GTPases Rab are key regulators of intracellular membrane trafficking, from the formation of transport vesicles to their fusion with membranes. Rabs cycle between an inactive GDP-bound form and an active GTP-bound form that is able to recruit to membranes different sets of downstream effectors directly responsible for vesicle formation, movement, tethering and fusion. RAB33B acts, in coordination with RAB6A, to regulate intra-Golgi retrograde trafficking. Participates in autophagosome formation by recruiting the ATG12-ATG5-ATG16L1 complex to phagophores, probably in a nucleotide-independent manner. The sequence is that of Ras-related protein Rab-33B (RAB33B) from Pongo abelii (Sumatran orangutan).